The sequence spans 355 residues: Protein RecA (355 aa).

An ATP-binding site is contributed by 67–74 (GPESSGKT).

This sequence belongs to the RecA family.

It is found in the cytoplasm. Can catalyze the hydrolysis of ATP in the presence of single-stranded DNA, the ATP-dependent uptake of single-stranded DNA by duplex DNA, and the ATP-dependent hybridization of homologous single-stranded DNAs. It interacts with LexA causing its activation and leading to its autocatalytic cleavage. This chain is Protein RecA, found in Shewanella piezotolerans (strain WP3 / JCM 13877).